A 366-amino-acid chain; its full sequence is Ribosomal RNA large subunit methyltransferase M (366 aa).

Residues serine 188, 221-224, aspartate 240, aspartate 260, and aspartate 277 contribute to the S-adenosyl-L-methionine site; that span reads CPGG. Lysine 306 functions as the Proton acceptor in the catalytic mechanism.

It belongs to the class I-like SAM-binding methyltransferase superfamily. RNA methyltransferase RlmE family. RlmM subfamily. In terms of assembly, monomer.

Its subcellular location is the cytoplasm. It catalyses the reaction cytidine(2498) in 23S rRNA + S-adenosyl-L-methionine = 2'-O-methylcytidine(2498) in 23S rRNA + S-adenosyl-L-homocysteine + H(+). Functionally, catalyzes the 2'-O-methylation at nucleotide C2498 in 23S rRNA. This is Ribosomal RNA large subunit methyltransferase M from Pectobacterium carotovorum subsp. carotovorum (strain PC1).